The chain runs to 147 residues: Globin (147 aa).

The 147-residue stretch at 1–147 (GLDGAQKTAL…LLTMLIKAHV (147 aa)) folds into the Globin domain. The heme b site is built by His66 and His98.

This sequence belongs to the globin family. As to quaternary structure, homodimer.

Its subcellular location is the cytoplasm. In Busycotypus canaliculatus (Channeled whelk), this protein is Globin.